The chain runs to 963 residues: Seizure 6-like protein (963 aa).

A signal peptide spans 1-31 (MPVARPQAAGPDRISLFLVAFLLGSPAAAQA). Disordered regions lie at residues 28-63 (AAQA…GVTS), 116-150 (RPLA…TAPA), and 164-204 (LPHS…TTTS). The Extracellular segment spans residues 32-897 (EDGGPEGEMH…ESSLEGGNMA (866 aa)). The segment covering 47–59 (LLPSASLESSLEE) has biased composition (low complexity). Over residues 120-135 (TPTTLQRLGSPASATT) the composition is skewed to polar residues. Low complexity predominate over residues 191 to 204 (TGSASEESQETTTS). Cysteine 221 and cysteine 248 are oxidised to a cystine. Positions 221 to 329 (CGVSFSDPEG…GTFQLHYQAF (109 aa)) constitute a CUB 1 domain. N-linked (GlcNAc...) asparagine glycans are attached at residues asparagine 251, asparagine 268, and asparagine 290. The Sushi 1 domain occupies 331–390 (LSCPFPRRPDAGEVTVMDLHSGGVAHFHCHLGYELQGAKTLTCINASKPHWSSQEPVCSA). 3 cysteine pairs are disulfide-bonded: cysteine 333/cysteine 373, cysteine 359/cysteine 388, and cysteine 392/cysteine 419. 6 N-linked (GlcNAc...) asparagine glycosylation sites follow: asparagine 375, asparagine 398, asparagine 414, asparagine 454, asparagine 516, and asparagine 558. Positions 392–502 (CGGAVHNATI…SAFNIRFEAF (111 aa)) constitute a CUB 2 domain. In terms of domain architecture, Sushi 2 spans 505 to 566 (GHCYEPYIQN…WNDTEPLCRA (62 aa)). 3 disulfides stabilise this stretch: cysteine 507–cysteine 549, cysteine 534–cysteine 564, and cysteine 568–cysteine 594. The region spanning 568 to 679 (CGGELSAVAG…QGFIMNYIEV (112 aa)) is the CUB 3 domain. 2 N-linked (GlcNAc...) asparagine glycosylation sites follow: asparagine 614 and asparagine 682. Sushi domains follow at residues 683–742 (DSCS…FCEK), 744–807 (MYCT…HCVS), and 811–872 (LACD…ICKV). 6 disulfides stabilise this stretch: cysteine 685/cysteine 727, cysteine 713/cysteine 740, cysteine 746/cysteine 788, cysteine 774/cysteine 805, cysteine 813/cysteine 855, and cysteine 841/cysteine 870. Residues 898–918 (LAIFIPVLLISLLLGGAYIYV) traverse the membrane as a helical segment. The Cytoplasmic segment spans residues 919–963 (TRCRQYSSLRLPLMYSHPYSQITVETEFDNPIYETGETREYEVSI).

It belongs to the SEZ6 family. Expressed exclusively in the brain, predominantly in neurons. Wide expression in the gray matter of the brain with high levels in the olfactory bulb, anterior olfactory nuclei, hippocampal formation and cerebellar cortex. Detected diffusely and weakly in the white matter, such as the corpus callosum and cerebellar medulla. In the cerebellar cortex, intensely expressed in Purkinje cells and granule cells. Detected also in interneurons in the molecular layer.

Its subcellular location is the cell membrane. The protein resides in the endoplasmic reticulum membrane. Functionally, candidate tumor suppressor gene. May contribute to specialized endoplasmic reticulum functions in neurons. The protein is Seizure 6-like protein (Sez6l) of Mus musculus (Mouse).